We begin with the raw amino-acid sequence, 63 residues long: Beta-defensin 4 (63 aa).

The N-terminal stretch at 1-22 is a signal peptide; that stretch reads MRIHYLLFTFLLVLLSPLAAFT. Position 23 is a pyrrolidone carboxylic acid (Gln-23). 3 cysteine pairs are disulfide-bonded: Cys-31–Cys-59, Cys-38–Cys-52, and Cys-42–Cys-60.

This sequence belongs to the beta-defensin family. As to expression, tongue, esophagus and trachea.

The protein resides in the secreted. In terms of biological role, exhibits antimicrobial activity against Gram-negative bacteria and Gram-positive bacteria. May act as a ligand for C-C chemokine receptor CCR6. Can bind to mouse (but not human) CCR6 and induce chemotactic activity of CCR6-expressing cells. The polypeptide is Beta-defensin 4 (Defb4) (Mus musculus (Mouse)).